The chain runs to 297 residues: Putative thiosulfate sulfurtransferase SseA (297 aa).

Rhodanese domains lie at 31 to 138 (GAPG…ETTL) and 168 to 286 (ILGA…VPIV). Cys245 functions as the Cysteine persulfide intermediate in the catalytic mechanism. Arg250 provides a ligand contact to substrate.

It carries out the reaction thiosulfate + hydrogen cyanide = thiocyanate + sulfite + 2 H(+). This chain is Putative thiosulfate sulfurtransferase SseA (sseA), found in Mycobacterium tuberculosis (strain CDC 1551 / Oshkosh).